We begin with the raw amino-acid sequence, 178 residues long: Ribulose bisphosphate carboxylase small subunit, chloroplastic (178 aa).

Residues 1 to 54 (MASISSSVATVSRTAPAQANMVAPFTGLKSNAAFPTTKKANDFSTLPSNGGRVQ) constitute a chloroplast transit peptide.

This sequence belongs to the RuBisCO small chain family. Heterohexadecamer of 8 large and 8 small subunits.

It localises to the plastid. It is found in the chloroplast. Its function is as follows. RuBisCO catalyzes two reactions: the carboxylation of D-ribulose 1,5-bisphosphate, the primary event in carbon dioxide fixation, as well as the oxidative fragmentation of the pentose substrate. Both reactions occur simultaneously and in competition at the same active site. Although the small subunit is not catalytic it is essential for maximal activity. The protein is Ribulose bisphosphate carboxylase small subunit, chloroplastic of Helianthus annuus (Common sunflower).